A 264-amino-acid chain; its full sequence is Adenosylcobinamide-GDP ribazoletransferase (264 aa).

Transmembrane regions (helical) follow at residues 39 to 59 (IAYAVPLAGAAIGLAGAAILI), 63 to 83 (ALGLPNLVAAILAVLTCVLLT), 121 to 141 (ACALVFSLLLRVALLDGLLAL), 148 to 168 (LALIAAASLSRAAGMLLLEFL), 201 to 221 (LLIVPSTGVGATLMAIGLSVL), and 241 to 261 (VAGAVQQLCEIAFLMGVLIYA).

This sequence belongs to the CobS family. Mg(2+) is required as a cofactor.

It localises to the cell inner membrane. The catalysed reaction is alpha-ribazole + adenosylcob(III)inamide-GDP = adenosylcob(III)alamin + GMP + H(+). It catalyses the reaction alpha-ribazole 5'-phosphate + adenosylcob(III)inamide-GDP = adenosylcob(III)alamin 5'-phosphate + GMP + H(+). Its pathway is cofactor biosynthesis; adenosylcobalamin biosynthesis; adenosylcobalamin from cob(II)yrinate a,c-diamide: step 7/7. In terms of biological role, joins adenosylcobinamide-GDP and alpha-ribazole to generate adenosylcobalamin (Ado-cobalamin). Also synthesizes adenosylcobalamin 5'-phosphate from adenosylcobinamide-GDP and alpha-ribazole 5'-phosphate. This chain is Adenosylcobinamide-GDP ribazoletransferase, found in Azorhizobium caulinodans (strain ATCC 43989 / DSM 5975 / JCM 20966 / LMG 6465 / NBRC 14845 / NCIMB 13405 / ORS 571).